The sequence spans 153 residues: UPF0756 membrane protein NT01CX_1209 (153 aa).

Transmembrane regions (helical) follow at residues 5-25, 45-65, 83-103, and 113-133; these read IILL…LGIA, ENHF…IPII, IVCF…VGFL, and IILG…GPLI.

This sequence belongs to the UPF0756 family.

It is found in the cell membrane. The chain is UPF0756 membrane protein NT01CX_1209 from Clostridium novyi (strain NT).